We begin with the raw amino-acid sequence, 43 residues long: Potassium channel toxin gamma-KTx 3.2 (43 aa).

Intrachain disulfides connect C5–C23, C11–C34, C20–C39, and C24–C41.

Belongs to the ergtoxin family. Gamma-KTx 3 subfamily. As to expression, expressed by the venom gland.

It localises to the secreted. Functionally, blocks Kv11/ERG potassium channels. This is Potassium channel toxin gamma-KTx 3.2 from Centruroides elegans (Bark scorpion).